Here is a 381-residue protein sequence, read N- to C-terminus: Succinyl-diaminopimelate desuccinylase (381 aa).

Zn(2+) is bound at residue H72. D74 is a catalytic residue. A Zn(2+)-binding site is contributed by D105. Residue E139 is the Proton acceptor of the active site. Zn(2+)-binding residues include E140, E168, and H354.

This sequence belongs to the peptidase M20A family. DapE subfamily. Homodimer. It depends on Zn(2+) as a cofactor. Requires Co(2+) as cofactor.

The enzyme catalyses N-succinyl-(2S,6S)-2,6-diaminopimelate + H2O = (2S,6S)-2,6-diaminopimelate + succinate. It participates in amino-acid biosynthesis; L-lysine biosynthesis via DAP pathway; LL-2,6-diaminopimelate from (S)-tetrahydrodipicolinate (succinylase route): step 3/3. In terms of biological role, catalyzes the hydrolysis of N-succinyl-L,L-diaminopimelic acid (SDAP), forming succinate and LL-2,6-diaminopimelate (DAP), an intermediate involved in the bacterial biosynthesis of lysine and meso-diaminopimelic acid, an essential component of bacterial cell walls. The chain is Succinyl-diaminopimelate desuccinylase from Shewanella sp. (strain ANA-3).